We begin with the raw amino-acid sequence, 179 residues long: Apolipophorin-3b (179 aa).

The first 16 residues, 1–16 (MNTLLAVLMLAVAAQA), serve as a signal peptide directing secretion. 12 repeats span residues 30–40 (VQQLNHTIVNA), 41–52 (AHELHETLGLPT), 53–60 (PDEALNLL), 61–78 (TEQA…TTSL), 79–89 (KQEAEKHQGSV), 90–99 (AEQLNRFARN), 100–113 (LNNS…SAQP), 114–127 (ADQL…LTNV), 128–140 (GHQW…RPSV), 141–151 (AQEAWAPVQSA), 152–165 (LQEA…AAAN), and 166–179 (LQNS…KPAN). An N-linked (GlcNAc...) asparagine glycan is attached at N34. N101 carries N-linked (GlcNAc...) asparagine glycosylation. A disordered region spans residues 152–179 (LQEAAEKTKEAAANLQNSIQSAVQKPAN). The segment covering 165–179 (NLQNSIQSAVQKPAN) has biased composition (polar residues).

It belongs to the insect apolipophorin-3 family. As to quaternary structure, equilibrium between a soluble monomer and a bound lipoprotein form. Apolipophorin-3 associates with lipophorin during lipid loading until each particle contains 14 molecules of apolipophorin-3 in L.migratoria (5 molecules of apolipophorin-3a and 9 of apolipophorin-3b). Hemolymph.

Its subcellular location is the secreted. Assists in the loading of diacylglycerol, generated from triacylglycerol stores in the fat body through the action of adipokinetic hormone, into lipophorin, the hemolymph lipoprotein. It increases the lipid carrying capacity of lipophorin by covering the expanding hydrophobic surface resulting from diacylglycerol uptake. It thus plays a critical role in the transport of lipids during flight in several species of insects. The sequence is that of Apolipophorin-3b from Locusta migratoria (Migratory locust).